Reading from the N-terminus, the 434-residue chain is Transcription elongation factor B polypeptide 3 (434 aa).

A disordered region spans residues lysine 142–glutamine 161. Residues glutamine 151–tyrosine 160 are compositionally biased toward polar residues. Residues threonine 221–leucine 230 are BC box. Residues isoleucine 237 to methionine 281 enclose the F-box domain. A disordered region spans residues isoleucine 391–glycine 415.

As to quaternary structure, heterotrimer of an A, B and C subunit.

The protein localises to the nucleus. SIII, also known as elongin, is a general transcription elongation factor that increases the RNA polymerase II transcription elongation past template-encoded arresting sites. Subunit A is transcriptionally active and its transcription activity is strongly enhanced by binding to the dimeric complex of the SIII regulatory subunits B and C (elongin BC complex). The polypeptide is Transcription elongation factor B polypeptide 3 (Caenorhabditis elegans).